The sequence spans 587 residues: GATA zinc finger domain-containing protein 3 (587 aa).

Over residues 53-74 the composition is skewed to low complexity; it reads NINNNINNNNNNNNNNNNNNIN. Disordered stretches follow at residues 53–141, 179–294, and 312–392; these read NINN…LKIP, QLAH…SSPS, and QTSP…ATIN. Residues 75–86 are compositionally biased toward polar residues; sequence QYHQNHYDQYSD. Low complexity-rich tracts occupy residues 87–136, 183–202, 237–264, 272–292, and 316–333; these read NNCN…NNNN, NSSMPNSPTSSNISPSTPTS, NINGNHHNNNNNINNNINNNVNNNINNG, GNNNNNNNIGVNGSGSSNSSS, and SQQSQQQQQQQQQQQQSQ. 2 stretches are compositionally biased toward polar residues: residues 340 to 358 and 365 to 379; these read INTTEIHQRSNPSSATNSP and NESSVENSPFTTPLS. A GATA-type zinc finger spans residues 500–525; sequence CIFCGTMETPEWRKGPGGHKTLCNAC. Positions 536–587 are disordered; sequence ENQNNGGSPNPQQNNVTTTTTTTTSTSTNSPNSNGNNFSPESAMSVSKLISD. Over residues 538 to 575 the composition is skewed to low complexity; sequence QNNGGSPNPQQNNVTTTTTTTTSTSTNSPNSNGNNFSP. Residues 577-587 show a composition bias toward polar residues; it reads SAMSVSKLISD.

This Dictyostelium discoideum (Social amoeba) protein is GATA zinc finger domain-containing protein 3 (gtaC).